The following is a 412-amino-acid chain: Odorant receptor 47b (412 aa).

Topologically, residues 1–74 (MNDSGYQSNL…NLFIMCNVMT (74 aa)) are cytoplasmic. A helical transmembrane segment spans residues 75-95 (IFWTMFVALPESKNVIEMGDD). Topologically, residues 96–103 (LVWISGMA) are extracellular. A helical transmembrane segment spans residues 104–124 (LVFTKIFYMHLRCDEIDELIS). Residues 125–169 (DFEYYNRELRPHNIDEEVLGWQRLCYVIESGLYINCFCLVNFFSA) lie on the Cytoplasmic side of the membrane. The helical transmembrane segment at 170 to 190 (AIFLQPLLGEGKLPFHSVYPF) threads the bilayer. Over 191 to 229 (QWHRLDLHPYTFWFLYIWQSLTSQHNLMSILMVDMVGIS) the chain is Extracellular. The helical transmembrane segment at 230-250 (TFLQTALNLKLLCIEIRKLGD) threads the bilayer. Topologically, residues 251 to 302 (MEVSDKRFHEEFCRVVRFHQHIIKLVGKANRAFNGAFNAQLMASFSLISIST) are cytoplasmic. Residues 303–323 (FETMAAAAVDPKMAAKFVLLM) form a helical membrane-spanning segment. The Extracellular portion of the chain corresponds to 324–330 (LVAFIQL). A helical transmembrane segment spans residues 331 to 351 (SLWCVSGTLVYTQSVEVAQAA). Residues 352–389 (FDINDWHTKSPGIQRDISFVILRAQKPLMYVAEPFLPF) lie on the Cytoplasmic side of the membrane. A helical membrane pass occupies residues 390–410 (TLGTYMLVLKNCYRLLALMQE). At 411–412 (SM) the chain is on the extracellular side.

It belongs to the insect chemoreceptor superfamily. Heteromeric odorant receptor channel (TC 1.A.69) family. Or49a subfamily. In terms of assembly, interacts with Orco. Complexes exist early in the endomembrane system in olfactory sensory neurons (OSNs), coupling these complexes to the conserved ciliary trafficking pathway. In terms of tissue distribution, expressed in olfactory sensory neurons in the antenna.

The protein localises to the cell membrane. Functionally, odorant receptor which mediates acceptance or avoidance behavior, depending on its substrates. The odorant receptor repertoire encodes a large collection of odor stimuli that vary widely in identity, intensity, and duration. May form a complex with Orco to form odorant-sensing units, providing sensitive and prolonged odorant signaling and calcium permeability. Plays an important role in sociosexual interactions since its enhances courtship in a pheromone-dependent manner. The protein is Odorant receptor 47b (Or47b) of Drosophila melanogaster (Fruit fly).